The following is a 943-amino-acid chain: Netrin receptor UNC5B-a (943 aa).

Residues 1-30 form the signal peptide; the sequence is MYLSRNPSGAALAAILVALILSCNFPSSTA. Topologically, residues 31–380 are extracellular; it reads GIEYSDVLPD…LESTGDVALY (350 aa). The Ig-like domain occupies 51 to 148; that stretch reads PHFLLEPEDA…AGTTKSKRSY (98 aa). Intrachain disulfides connect cysteine 72-cysteine 133, cysteine 84-cysteine 131, cysteine 177-cysteine 228, cysteine 261-cysteine 298, cysteine 265-cysteine 302, cysteine 276-cysteine 288, cysteine 317-cysteine 351, cysteine 321-cysteine 356, and cysteine 329-cysteine 341. The region spanning 150-245 is the Ig-like C2-type domain; the sequence is RIAYLRKNFD…KRRSTTATVI (96 aa). The N-linked (GlcNAc...) asparagine glycan is linked to asparagine 225. TSP type-1 domains lie at 249 to 303 and 305 to 357; these read NGGW…TMCP and DGGW…GLCM. Asparagine 350 carries an N-linked (GlcNAc...) asparagine glycan. The chain crosses the membrane as a helical span at residues 381–401; that stretch reads AGLVVAIFIVIILLMAVGIVV. Residues 402-943 are Cytoplasmic-facing; it reads YRRNCREFDT…MLVMATDGDC (542 aa). Positions 542–685 constitute a ZU5 domain; it reads NSVTGTFGSL…LGTYAFVGES (144 aa). The tract at residues 688–836 is UPA domain; the sequence is RSAIKRLQLA…LEENVKSFDP (149 aa). Residues 863 to 941 form the Death domain; the sequence is KICNSLDAPN…EMMLVMATDG (79 aa).

The protein belongs to the unc-5 family. Interacts (via extracellular domain) with flrt3 (via extracellular domain). Interacts with rnd1. Phosphorylated on cytoplasmic tyrosine residues. In the developing visual system, it is expressed within the developing optic vesicles and later become restricted to the dorsal ciliary marginal zone, a site of retinoblast proliferation and differentiation.

The protein localises to the cell membrane. Its function is as follows. Plays a role in cell-cell adhesion during embryonic development. Receptor for netrin required for axon guidance. Mediates axon repulsion of neuronal growth cones in the developing nervous system upon ligand binding. This Xenopus laevis (African clawed frog) protein is Netrin receptor UNC5B-a (unc5b-a).